Here is a 193-residue protein sequence, read N- to C-terminus: METLWLVVGLGNPGPGYAATRHNVGQLVLDELASRDRLSFKTHKTNATVAEGRIVPGGPRFVLAKPNTYMNGSGGPVSQLLRFYSLEPSRLIVVQDELDIPFDTLRLKFGGGHGGHNGVRDVIAEVGSGDFTRVRVGVGRPPGVQAAADHVLKGFSAAERKNLPILVADAADAVERIAAEGLTAAQNRFHTAG.

Residue Y17 participates in tRNA binding. Catalysis depends on H22, which acts as the Proton acceptor. The tRNA site is built by Y69, N71, and N117.

It belongs to the PTH family. As to quaternary structure, monomer.

It localises to the cytoplasm. It carries out the reaction an N-acyl-L-alpha-aminoacyl-tRNA + H2O = an N-acyl-L-amino acid + a tRNA + H(+). Functionally, hydrolyzes ribosome-free peptidyl-tRNAs (with 1 or more amino acids incorporated), which drop off the ribosome during protein synthesis, or as a result of ribosome stalling. Catalyzes the release of premature peptidyl moieties from peptidyl-tRNA molecules trapped in stalled 50S ribosomal subunits, and thus maintains levels of free tRNAs and 50S ribosomes. The protein is Peptidyl-tRNA hydrolase of Leifsonia xyli subsp. xyli (strain CTCB07).